Consider the following 1145-residue polypeptide: Adenylate cyclase type 3 (1145 aa).

Residues 1-79 (MPRNQGFSDP…FKRQRHETLL (79 aa)) lie on the Cytoplasmic side of the membrane. A run of 5 helical transmembrane segments spans residues 80 to 100 (VLVVFAALFDCYVVVMCAVVF), 105 to 125 (LAPLMVAGFGLVLDIILFVLC), 139 to 159 (VPYLLWLLISAQIFSYLGLNF), 173 to 193 (AFFVFSFFITLPLSLSPIVII), and 226 to 246 (ILANVFLYLCAIIVGIMSYYM). Residues D324, I325, and D368 each contribute to the Mg(2+) site. Residues 324-329 (DIVGFT) and 366-368 (LGD) each bind ATP. The chain crosses the membrane as a helical span at residues 381-401 (EDHAVCSILMGLAMVEAISYV). Over 402–631 (REKTKTGVDM…RYSVEKEKQS (230 aa)) the chain is Cytoplasmic. R412 serves as a coordination point for ATP. K465 is covalently cross-linked (Glycyl lysine isopeptide (Lys-Gly) (interchain with G-Cter in SUMO3)). Positions 504 to 564 (QNGLNGSAVP…DNPSFPNPRR (61 aa)) are disordered. 2 stretches are compositionally biased toward low complexity: residues 516 to 526 (APASSKPSSPA) and 535 to 544 (GSAHASGSTS). Position 524 is a phosphoserine (S524). S579 carries the post-translational modification Phosphoserine. 3 consecutive transmembrane segments (helical) span residues 632 to 652 (GAAFSCSCVVLFCTAMVEILI), 663 to 683 (FVVGEVLLLILTICSMAAIFP), and 707 to 727 (WAMLAIFILVMANVVDMLSCL). N735 carries N-linked (GlcNAc...) asparagine glycosylation. 3 helical membrane passes run 753 to 773 (YNYVAVLSLIATIMLVQVSHM), 774 to 794 (VKLTLMLLVTGAVTALNLYAW), and 834 to 854 (LPLVPSKYSMTVMMFVMMLSF). The Cytoplasmic portion of the chain corresponds to 855 to 1145 (YYFSRHVEKL…TLPHQVVDNP (291 aa)). Residues K976, 1063-1065 (DIW), and 1070-1074 (NVASR) contribute to the ATP site. S1077 is modified (phosphoserine; by CaMK2). K1110 provides a ligand contact to ATP.

The protein belongs to the adenylyl cyclase class-4/guanylyl cyclase family. Mg(2+) serves as cofactor. Requires Mn(2+) as cofactor. In terms of processing, N-glycosylated. Rapidly phosphorylated after stimulation by odorants or forskolin. Phosphorylation by CaMK2 at Ser-1077 down-regulates enzyme activity. Post-translationally, sumoylated. Sumoylation is required for targeting of olfactory cilia. As to expression, detected in the acrosomal region of epididymal spermatozoa, the acrosomal region of round spermatids and in elongating spermatids. Detected in cilia in the olfactory epithelium (at protein level). Detected in olfactory epithelium neurons. Detected in brain, testis, late pachytene spermatocytes, round spermatids and elongating spermatids.

Its subcellular location is the cell membrane. The protein resides in the cell projection. It is found in the cilium. It localises to the golgi apparatus. The protein localises to the cytoplasm. The catalysed reaction is ATP = 3',5'-cyclic AMP + diphosphate. Specifically activated by the G alpha protein GNAL/G(olf) in signaling cascades triggered by odorant receptors. Activated by forskolin. After forskolin treatment, activity is further increased by calcium/calmodulin. In the absence of forskolin, calcium/calmodulin has little effect on enzyme activity. In terms of biological role, catalyzes the formation of the signaling molecule cAMP in response to G-protein signaling. Participates in signaling cascades triggered by odorant receptors via its function in cAMP biosynthesis: specifically activated by G alpha protein GNAL/G(olf) in olfactory epithelium. Required for the perception of odorants. Required for normal sperm motility and normal male fertility. Plays a role in regulating insulin levels and body fat accumulation in response to a high fat diet. In Mus musculus (Mouse), this protein is Adenylate cyclase type 3 (Adcy3).